A 600-amino-acid polypeptide reads, in one-letter code: Glutamine--fructose-6-phosphate aminotransferase [isomerizing] (600 aa).

C2 acts as the Nucleophile; for GATase activity in catalysis. Residues 2–217 (CGIVGYIGQL…DKEMVIVTDD (216 aa)) enclose the Glutamine amidotransferase type-2 domain. SIS domains lie at 283-422 (IAAA…KNGI) and 452-590 (IARE…VDKP). K595 functions as the For Fru-6P isomerization activity in the catalytic mechanism.

As to quaternary structure, homodimer.

Its subcellular location is the cytoplasm. The catalysed reaction is D-fructose 6-phosphate + L-glutamine = D-glucosamine 6-phosphate + L-glutamate. In terms of biological role, catalyzes the first step in hexosamine metabolism, converting fructose-6P into glucosamine-6P using glutamine as a nitrogen source. The protein is Glutamine--fructose-6-phosphate aminotransferase [isomerizing] (glmS) of Bacillus spizizenii (strain ATCC 23059 / NRRL B-14472 / W23) (Bacillus subtilis subsp. spizizenii).